The chain runs to 461 residues: Peptidyl-prolyl cis-trans isomerase-like 4 (461 aa).

A PPIase cyclophilin-type domain is found at 1–171 (MSVLLETSLG…KDIRIRHTVI (171 aa)). Residues 205-234 (EELDDNMDEESMEKLRREREARAQALTLEM) adopt a coiled-coil conformation. In terms of domain architecture, RRM spans 248–326 (NVLFVCKLNP…HRIHVDFSQS (79 aa)). A disordered region spans residues 341-461 (KRSGQRGGFG…DERYRERRRR (121 aa)). 2 stretches are compositionally biased toward basic and acidic residues: residues 365–384 (DNAR…GDKA) and 398–461 (SNRD…RRRR).

The protein belongs to the cyclophilin-type PPIase family. PPIL4 subfamily.

Its subcellular location is the nucleus. It carries out the reaction [protein]-peptidylproline (omega=180) = [protein]-peptidylproline (omega=0). In terms of biological role, PPIases accelerate the folding of proteins. It catalyzes the cis-trans isomerization of proline imidic peptide bonds in oligopeptides. This chain is Peptidyl-prolyl cis-trans isomerase-like 4 (cyp6), found in Aspergillus oryzae (strain ATCC 42149 / RIB 40) (Yellow koji mold).